We begin with the raw amino-acid sequence, 98 residues long: Alpha-elicitin MGM-alpha (98 aa).

3 cysteine pairs are disulfide-bonded: C3–C71, C27–C56, and C51–C95.

Belongs to the elicitin family.

The protein resides in the secreted. Its function is as follows. Induces local and distal defense responses (incompatible hypersensitive reaction) in plants from the solanaceae and cruciferae families. Elicits leaf necrosis and causes the accumulation of pathogenesis-related proteins. Might interact with the lipidic molecules of the plasma membrane. The polypeptide is Alpha-elicitin MGM-alpha (Phytophthora megasperma (Potato pink rot fungus)).